Consider the following 642-residue polypeptide: UvrABC system protein C (642 aa).

In terms of domain architecture, GIY-YIG spans 20–97 (ERCGVYRMFD…IKKFQPKFNI (78 aa)). Residues 207 to 242 (KELQENLSKKMEELSSQMRFEEAAEIRDRIKALSYV) form the UVR domain.

Belongs to the UvrC family. Interacts with UvrB in an incision complex.

Its subcellular location is the cytoplasm. In terms of biological role, the UvrABC repair system catalyzes the recognition and processing of DNA lesions. UvrC both incises the 5' and 3' sides of the lesion. The N-terminal half is responsible for the 3' incision and the C-terminal half is responsible for the 5' incision. The chain is UvrABC system protein C from Rickettsia felis (strain ATCC VR-1525 / URRWXCal2) (Rickettsia azadi).